The following is a 1142-amino-acid chain: Ribonucleoside-diphosphate reductase large subunit (1142 aa).

The disordered stretch occupies residues 1–33; it reads MANRPAASALAGARSPSERQEPREPEVAPPGGD. The span at 16–26 shows a compositional bias: basic and acidic residues; that stretch reads PSERQEPREPE. The RIP homotypic interaction motif (RHIM) signature appears at 55-75; the sequence is AYRISDSSFVQCGSNCSMIID. The interval 118-322 is disordered; that stretch reads SGPSATTSVG…TDPGYPVPLE (205 aa). Residues 119–132 are compositionally biased toward polar residues; it reads GPSATTSVGTQTSG. The span at 141 to 159 shows a compositional bias: pro residues; it reads TPEPQGPQAVPPPPPPPFP. Over residues 164–179 the composition is skewed to basic and acidic residues; it reads CCARRDARGGAEKDVG. The segment covering 192-205 has biased composition (acidic residues); the sequence is SETEDSDSSDEDTG. A compositionally biased stretch (low complexity) spans 277–303; that stretch reads GSATDPRASADSDSAAHAAAPQADVAP. Residues 294–400 form an alpha-crystallin domain region; it reads AAAPQADVAP…CLDLPPVPPN (107 aa). Substrate-binding positions include Thr571, 586–587, Gly617, 796–800, and 973–977; these read SC, NLCTE, and PTAAS. Cys587 and Cys813 form a disulfide bridge. The Proton acceptor role is filled by Asn796. Cys798 functions as the Cysteine radical intermediate in the catalytic mechanism. Glu800 serves as the catalytic Proton acceptor.

It belongs to the ribonucleoside diphosphate reductase large chain family. As to quaternary structure, heterotetramer composed of a homodimer of the large subunit (R1) and a homodimer of the small subunit (R2). Larger multisubunit protein complex are also active, composed of (R1)n(R2)n. May self-assemble (via RIP homotypic interaction motif/RHIM) into homomeric fibrillar amyloid structures. Interacts (via RHIM) with human RIPK1 (via RHIM). Interacts (via RHIM) with human RIPK3 (via RHIM). May interact (via RHIM) with human ZBP1 (via RHIM). Interacts (via C-terminus) with host CASP8.

It localises to the host cell membrane. The protein resides in the host endosome membrane. The enzyme catalyses a 2'-deoxyribonucleoside 5'-diphosphate + [thioredoxin]-disulfide + H2O = a ribonucleoside 5'-diphosphate + [thioredoxin]-dithiol. Ribonucleoside-diphosphate reductase holoenzyme that provides the precursors necessary for viral DNA synthesis. Allows virus growth in non-dividing cells, as well as reactivation from latency in infected hosts. Catalyzes the biosynthesis of deoxyribonucleotides from the corresponding ribonucleotides. The N-terminal region confers antiapoptotic activity in differentiated cells such as neurons and is important for viral reactivation to increase neural survivability. Prevents host necroptosis by targeting host RIPK1 and RIPK3, thereby hampering the formation of necroptotic RIPK1-RIPK3 complexes. May form hetero-amyloid structures with host proteins RIPK3 or ZBP1, thereby preventing RIPK3- and ZBP1-mediated necroptosis. In addition, inhibits extrinsic apoptosis by targeting host CASP8. The protein is Ribonucleoside-diphosphate reductase large subunit of Homo sapiens (Human).